Here is a 359-residue protein sequence, read N- to C-terminus: Putative cyclin-F1-2 (359 aa).

Belongs to the cyclin family. Cyclin F subfamily.

The sequence is that of Putative cyclin-F1-2 (CYCF1-2) from Oryza sativa subsp. japonica (Rice).